A 161-amino-acid chain; its full sequence is uncharacterized protein (161 aa).

To M.thermoautotrophicum MTH862.

This is an uncharacterized protein from Methanocaldococcus jannaschii (strain ATCC 43067 / DSM 2661 / JAL-1 / JCM 10045 / NBRC 100440) (Methanococcus jannaschii).